A 338-amino-acid chain; its full sequence is Lipoate-protein ligase A (338 aa).

The BPL/LPL catalytic domain maps to 29–216 (PATQRVLFLW…AFFSHYGERV (188 aa)). Residues R71, 76–79 (GAVF), and K134 contribute to the ATP site. K134 lines the (R)-lipoate pocket.

This sequence belongs to the LplA family. Monomer.

Its subcellular location is the cytoplasm. It catalyses the reaction L-lysyl-[lipoyl-carrier protein] + (R)-lipoate + ATP = N(6)-[(R)-lipoyl]-L-lysyl-[lipoyl-carrier protein] + AMP + diphosphate + H(+). It participates in protein modification; protein lipoylation via exogenous pathway; protein N(6)-(lipoyl)lysine from lipoate: step 1/2. The protein operates within protein modification; protein lipoylation via exogenous pathway; protein N(6)-(lipoyl)lysine from lipoate: step 2/2. In terms of biological role, catalyzes both the ATP-dependent activation of exogenously supplied lipoate to lipoyl-AMP and the transfer of the activated lipoyl onto the lipoyl domains of lipoate-dependent enzymes. This is Lipoate-protein ligase A from Klebsiella pneumoniae subsp. pneumoniae (strain ATCC 700721 / MGH 78578).